Here is a 116-residue protein sequence, read N- to C-terminus: Heme-degrading monooxygenase (116 aa).

Positions 2–92 (VIVTNTSKIT…EYILENKISF (91 aa)) constitute an ABM domain. Position 6 (asparagine 6) interacts with Fe cation. Histidine 76 lines the heme pocket.

It belongs to the antibiotic biosynthesis monooxygenase family. Heme-degrading monooxygenase IsdG subfamily. Homodimer.

It localises to the cytoplasm. It catalyses the reaction heme b + 3 reduced [NADPH--hemoprotein reductase] + 3 O2 = biliverdin IXalpha + CO + Fe(2+) + 3 oxidized [NADPH--hemoprotein reductase] + 3 H2O + H(+). Allows bacterial pathogens to use the host heme as an iron source. Catalyzes the oxidative degradation of the heme macrocyclic porphyrin ring to the biliverdin in the presence of a suitable electron donor such as ascorbate or NADPH--cytochrome P450 reductase, with subsequent release of free iron. This Halalkalibacterium halodurans (strain ATCC BAA-125 / DSM 18197 / FERM 7344 / JCM 9153 / C-125) (Bacillus halodurans) protein is Heme-degrading monooxygenase.